Here is a 1096-residue protein sequence, read N- to C-terminus: Centrosome-associated zinc finger protein Cp190 (1096 aa).

The tract at residues 1 to 209 (MGEVKSVKVD…GDSSNVKQEP (209 aa)) is involved in microtubule and centrosome binding. The 68-residue stretch at 30 to 97 (CDLTLQFRDN…MYTGTLEFEL (68 aa)) folds into the BTB domain. A disordered region spans residues 126-308 (MENVNRQQRP…PQGTQTQLEH (183 aa)). 2 stretches are compositionally biased toward polar residues: residues 175-213 (RANTQRGSTGNTMSRTSGGSNRSPYGDSSNVKQEPTSPF) and 220-230 (YNNNKRPAQTS). Phosphoserine occurs at positions 197 and 211. Residues 207–271 (QEPTSPFEQL…GDNDPEYDGG (65 aa)) form a nuclear localization region. Residues 210–245 (TSPFEQLRKGYNNNKRPAQTSLLSPPSKKPSLEEVK) are involved in interaction with cliff. T229 bears the Phosphothreonine mark. Position 233 is a phosphoserine (S233). A compositionally biased stretch (basic and acidic residues) spans 239-252 (PSLEEVKEFAEQQR). Residues 245-468 (KEFAEQQRMR…IAQGAENTTG (224 aa)) are centrosomal targeting M domain involved in interaction with ZIPIC. Low complexity predominate over residues 292 to 305 (STSKQQSPQGTQTQ). 2 positions are modified to phosphoserine: S298 and S319. The tract at residues 309–390 (GSTTIILKQD…KPPANQSSAT (82 aa)) is involved in interaction with cliff. The segment at 366–449 (NTPAAPTEKS…ANTAAAQKRR (84 aa)) is disordered. A centrosomal localization and interaction with microtubules region spans residues 385-508 (NQSSATTSPH…KETIDPALCE (124 aa)). The span at 412-445 (AQQKAASSQQKSGTSQTTGNQGTGANPPANTAAA) shows a compositional bias: low complexity. C2H2-type zinc fingers lie at residues 538-561 (AECALCNQSYRTKGELEAHINEVH) and 567-590 (QQCIYCNKVFEQELQLYRHMKSYH). Position 603 is a phosphothreonine (T603). Over residues 608 to 625 (LGSQDEEEEAEGDEEQEP) the composition is skewed to acidic residues. Residues 608 to 630 (LGSQDEEEEAEGDEEQEPEQTGK) form a disordered region. 3 positions are modified to phosphoserine: S610, S708, and S723. The interval 710-733 (PEAEHVKQETDEKSLAGTEEEYDD) is disordered. Positions 711-723 (EAEHVKQETDEKS) are enriched in basic and acidic residues. Residue T727 is modified to Phosphothreonine. 4 positions are modified to phosphoserine: S745, S748, S757, and S760. The segment at 770 to 927 (LIAESEEQSN…EDSPIPHSDS (158 aa)) is disordered. The span at 777–799 (QSNKEPKSDKPRDDISEKLKELT) shows a compositional bias: basic and acidic residues. Residues 802 to 812 (WTEDENDDDVD) show a composition bias toward acidic residues. T817 carries the phosphothreonine modification. Basic and acidic residues-rich tracts occupy residues 825–834 (ANKDPEPTVH), 849–861 (KGPEEATEEKASE), 882–907 (EKMDVDSEAADEKASKAEVQIKKEAE), and 914–927 (EFIKEDSPIPHSDS). 3 positions are modified to phosphoserine: S920, S925, and S927. T936 is modified (phosphothreonine). Residue S938 is modified to Phosphoserine. Composition is skewed to basic and acidic residues over residues 960–973 (IAEAEKPDQEKDIV) and 1011–1035 (AAEKAAENNEDTRTADEKEAVEDKP). A disordered region spans residues 960–1096 (IAEAEKPDQE…GVSAAAKEEL (137 aa)). S1071 and S1074 each carry phosphoserine. The segment covering 1076 to 1086 (WGDDDEDEDEN) has biased composition (acidic residues).

As to quaternary structure, homodimerizes via the N-terminal BTB domain. Component of the gypsy chromatin insulator complex, composed of Cp190, mod(mdg4) and su(Hw). The gypsy chromatin insulator complex interacts with Topors via mod(mdg4) and su(Hw). Interacts with Cp60. Interacts with inv. Interacts with Nup98. Interacts (via BTB domain) with pita (via region between the ZAD domain and the first zinc finger domain); the interaction is direct. Interacts with ZIPIC (via region between the ZAD domain and the first zinc finger domain); the interaction is direct. Interacts (via regions between the BTB domain and first zinc finger domain) with cliff (via regions flanking MADF domain 1); the interaction is probably direct. Associates (via N-terminus) with microtubules; the interaction is direct, is enhanced by dimerization and involves multiple regions within the N-terminus. Microtubule association is enriched at growing plus ends. Expressed in spermatids but not in mature spermatozoa. Localizes within the spermatids to a sheath of microtubules around the nucleus and to microtubules within the tail.

It localises to the nucleus. The protein localises to the cytoplasm. Its subcellular location is the cytoskeleton. It is found in the microtubule organizing center. The protein resides in the centrosome. It localises to the chromosome. The protein localises to the nucleoplasm. Plays a central role in chromatin domain organization and boundary function through recruitment by a range of insulator DNA-binding proteins, including ZIPIC, pita, CTCF, su(Hw), cliff and others. Together with pita and CTCF cooperatively binds to and regulates the activity of the Miscadastral pigmentation (MCP) insulator. Cooperatively recruited to the front-ultraabdominal (Fub) boundary by pita, su(Hw) and cliff. Recruitment of Cp190 together with Chro/chromator induces chromatin decondensation. Component of the gypsy chromatin insulator complex which is required for the function of the gypsy chromatin insulator and other endogenous chromatin insulators. Chromatin insulators are regulatory elements that establish independent domains of transcriptional activity within eukaryotic genomes. Insulators have two defining properties; they can block the communication between an enhancer and a promoter when placed between them and can also buffer transgenes from position effect variegation (PEV). Insulators are proposed to structure the chromatin fiber into independent domains of differing transcriptional potential by promoting the formation of distinct chromatin loops to form topologically associating domains (TADs). This chromatin looping may involve the formation of insulator bodies, where homotypic interactions between individual subunits of the insulator complex could promote the clustering of widely spaced insulators at the nuclear periphery. Within the gypsy insulator complex, this protein may directly bind to insulator DNA at sites distinct from those recognized by su(Hw). Required during embryogenesis for axial expansion, an actin/myosin dependent process that distributes the dividing nuclei along the anterior-posterior axis of the syncytial embryo. Associates with centrosomes and interphase microtubules during mitosis, and recruits CP60; may have a role in maintaining centrosome and spindle integrity. In Drosophila melanogaster (Fruit fly), this protein is Centrosome-associated zinc finger protein Cp190.